The following is a 1391-amino-acid chain: Enhancer of mRNA-decapping protein 4 (1391 aa).

WD repeat units lie at residues 170–210, 226–274, 292–331, and 340–390; these read GITG…GKIQ, SIFR…TNHN, GHSG…QDQP, and HNGR…SLQT. Disordered regions lie at residues 703 to 724 and 897 to 924; these read QASP…AMPQ and DWKS…LAKS. Basic and acidic residues predominate over residues 915-924; sequence KKDEMELAKS. Residues 935-968 adopt a coiled-coil conformation; it reads ELQEELLCMLRSQQKELSDLRQNQLELMKKLTDH.

It belongs to the WD repeat EDC4 family.

The protein localises to the cytoplasm. Its subcellular location is the P-body. The protein resides in the nucleus. Its function is as follows. In the process of mRNA degradation, seems to play a role in mRNA decapping. This chain is Enhancer of mRNA-decapping protein 4 (edc4), found in Xenopus laevis (African clawed frog).